The chain runs to 663 residues: Glutamate-rich protein 6 (663 aa).

Disordered regions lie at residues 1–74 (MAHL…ETFS) and 106–136 (LTST…HKSF). The span at 20-69 (ESEEELEEEEEEEEVEEEEEEVEEEEEEVEEEEEEVVEEELVGEEQELEA) shows a compositional bias: acidic residues. Low complexity predominate over residues 112 to 132 (PSQSATSTETPSASPPSSTSS).

The protein belongs to the ERICH6 family.

Its subcellular location is the nucleus. The protein is Glutamate-rich protein 6 (ERICH6) of Homo sapiens (Human).